The following is a 346-amino-acid chain: Hydroxymethylglutaryl-CoA synthase (346 aa).

D28 lines the (3S)-3-hydroxy-3-methylglutaryl-CoA pocket. The active-site Proton donor/acceptor is the E80. The (3S)-3-hydroxy-3-methylglutaryl-CoA site is built by C112 and T153. Catalysis depends on C112, which acts as the Acyl-thioester intermediate. R199 serves as a coordination point for CoA. Residues T201 and H234 each coordinate (3S)-3-hydroxy-3-methylglutaryl-CoA. The active-site Proton donor/acceptor is the H234. K239 provides a ligand contact to CoA. Residues R243, N266, and S296 each coordinate (3S)-3-hydroxy-3-methylglutaryl-CoA.

This sequence belongs to the thiolase-like superfamily. Archaeal HMG-CoA synthase family. In terms of assembly, interacts with acetoacetyl-CoA thiolase that catalyzes the precedent step in the pathway and with a DUF35 protein. The acetoacetyl-CoA thiolase/HMG-CoA synthase complex channels the intermediate via a fused CoA-binding site, which allows for efficient coupling of the endergonic thiolase reaction with the exergonic HMGCS reaction.

The catalysed reaction is acetoacetyl-CoA + acetyl-CoA + H2O = (3S)-3-hydroxy-3-methylglutaryl-CoA + CoA + H(+). It functions in the pathway metabolic intermediate biosynthesis; (R)-mevalonate biosynthesis; (R)-mevalonate from acetyl-CoA: step 2/3. Its function is as follows. Catalyzes the condensation of acetyl-CoA with acetoacetyl-CoA to form 3-hydroxy-3-methylglutaryl-CoA (HMG-CoA). Functions in the mevalonate (MVA) pathway leading to isopentenyl diphosphate (IPP), a key precursor for the biosynthesis of isoprenoid compounds that are building blocks of archaeal membrane lipids. The polypeptide is Hydroxymethylglutaryl-CoA synthase (Methanosphaera stadtmanae (strain ATCC 43021 / DSM 3091 / JCM 11832 / MCB-3)).